Here is a 573-residue protein sequence, read N- to C-terminus: Anti-Muellerian hormone type-2 receptor (573 aa).

Residues 1–17 (MLGSLGLWALLPTAVEA) form the signal peptide. At 18 to 149 (PPNRRTCVFF…APGESIWMAL (132 aa)) the chain is on the extracellular side. Disulfide bonds link Cys-55/Cys-79 and Cys-92/Cys-109. An N-linked (GlcNAc...) asparagine glycan is attached at Asn-66. Asn-119 carries N-linked (GlcNAc...) asparagine glycosylation. Residues 150–170 (VLLGLFLLLLLLLGSIILALL) traverse the membrane as a helical segment. Over 171 to 573 (QRKNYRVRGE…PQPACTLSPV (403 aa)) the chain is Cytoplasmic. Residues 203–518 (LCFSQVIREG…AHPQESHPFP (316 aa)) enclose the Protein kinase domain. ATP is bound by residues 209 to 217 (IREGGHAVV) and Lys-230. Residue Asp-333 is the Proton acceptor of the active site.

Belongs to the protein kinase superfamily. TKL Ser/Thr protein kinase family. TGFB receptor subfamily. As to quaternary structure, interacts with type I receptor ACVR1. It depends on Mg(2+) as a cofactor. Requires Mn(2+) as cofactor.

Its subcellular location is the membrane. The enzyme catalyses L-threonyl-[receptor-protein] + ATP = O-phospho-L-threonyl-[receptor-protein] + ADP + H(+). It carries out the reaction L-seryl-[receptor-protein] + ATP = O-phospho-L-seryl-[receptor-protein] + ADP + H(+). On ligand binding, forms a receptor complex consisting of two type II and two type I transmembrane serine/threonine kinases. Type II receptors phosphorylate and activate type I receptors which autophosphorylate, then bind and activate SMAD transcriptional regulators. Receptor for anti-Muellerian hormone. In Homo sapiens (Human), this protein is Anti-Muellerian hormone type-2 receptor (AMHR2).